A 250-amino-acid polypeptide reads, in one-letter code: MTESILAAQIEVGEHHTATWLGMTVNTDTVLSTAIAALIVLALAFYLRSKVTSTAVPGGVQLFFEAITIQMRGQVESAIGMRIAPFVLPLAVTIFVFILISNWLSVLPVQYTDEHGQTTELLKPAAADINYVLALALFVFVCYHAAGIWRRGIVGHPIKLLKGHVAILAPINLVEEIAKPISLSLRLFGNIFAGGILVALIALFPPYIMWAPNAIWKSFDLFVGAIQAFIFALLTILYFSQAMELEEDHH.

Transmembrane regions (helical) follow at residues 27-47 (TDTVLSTAIAALIVLALAFYL), 83-103 (IAPFVLPLAVTIFVFILISNW), 129-149 (INYVLALALFVFVCYHAAGIW), 191-211 (IFAGGILVALIALFPPYIMWA), and 219-239 (FDLFVGAIQAFIFALLTILYF).

Belongs to the ATPase A chain family. F-type ATPases have 2 components, CF(1) - the catalytic core - and CF(0) - the membrane proton channel. CF(1) has five subunits: alpha(3), beta(3), gamma(1), delta(1), epsilon(1). CF(0) has three main subunits: a(1), b(2) and c(9-12). The alpha and beta chains form an alternating ring which encloses part of the gamma chain. CF(1) is attached to CF(0) by a central stalk formed by the gamma and epsilon chains, while a peripheral stalk is formed by the delta and b chains.

It localises to the cell membrane. Functionally, key component of the proton channel; it plays a direct role in the translocation of protons across the membrane. The chain is ATP synthase subunit a from Mycobacterium marinum (strain ATCC BAA-535 / M).